The chain runs to 275 residues: Large ribosomal subunit protein uL2c (275 aa).

A disordered region spans residues 225 to 259 (KNPVDHPHGGGEGRAPIGRSTPVTPWGKPALGRRT).

The protein belongs to the universal ribosomal protein uL2 family. Part of the 50S ribosomal subunit.

It is found in the plastid. It localises to the cyanelle. This chain is Large ribosomal subunit protein uL2c (rpl2), found in Cyanophora paradoxa.